The chain runs to 587 residues: Polyphenol oxidase E, chloroplastic (587 aa).

Residues 1-87 (MSSSSSITTT…AANLAPLATA (87 aa)) constitute a chloroplast transit peptide. 2 disulfide bridges follow: cysteine 98/cysteine 114 and cysteine 113/cysteine 180. Cu cation-binding residues include histidine 179, histidine 197, histidine 206, histidine 328, histidine 332, and histidine 363. A cross-link (2'-(S-cysteinyl)-histidine (Cys-His)) is located at residues 183–197 (CNGAYKVGGKELQVH).

It belongs to the tyrosinase family. Cu(2+) is required as a cofactor.

The protein localises to the plastid. Its subcellular location is the chloroplast thylakoid lumen. It catalyses the reaction 2 catechol + O2 = 2 1,2-benzoquinone + 2 H2O. Catalyzes the oxidation of mono- and o-diphenols to o-diquinones. In Solanum lycopersicum (Tomato), this protein is Polyphenol oxidase E, chloroplastic.